The sequence spans 357 residues: Poly(3-hydroxyalkanoate) polymerase subunit PhaE (357 aa).

Positions 320 to 357 (AALAGEEPATKPATALRSPAPAAKAPARRRTTKTNPAD) are disordered. The span at 331–344 (PATALRSPAPAAKA) shows a compositional bias: low complexity.

The protein belongs to the PHA/PHB synthase family. Type III PhaE subfamily. A large complex of PhaC and PhaE; the ratio of the subunits has been estimated to be from 1:1 to 4:1, with more PhaE than PhaC.

The protein localises to the cytoplasm. It functions in the pathway biopolymer metabolism; poly-(R)-3-hydroxybutanoate biosynthesis. Polymerizes D(-)-3-hydroxybutyryl-CoA to create polyhydroxybutyrate (PHB) which consists of thousands of hydroxybutyrate molecules linked end to end. This subunit has no catalytic activity but enhances the activity of PhaC, the catalytic subunit, 100-fold. In Allochromatium vinosum (strain ATCC 17899 / DSM 180 / NBRC 103801 / NCIMB 10441 / D) (Chromatium vinosum), this protein is Poly(3-hydroxyalkanoate) polymerase subunit PhaE.